The primary structure comprises 85 residues: Putative regulatory protein DICTH_1339 (85 aa).

The protein belongs to the RemA family.

The sequence is that of Putative regulatory protein DICTH_1339 from Dictyoglomus thermophilum (strain ATCC 35947 / DSM 3960 / H-6-12).